Reading from the N-terminus, the 134-residue chain is Aspartate 1-decarboxylase (134 aa).

The Schiff-base intermediate with substrate; via pyruvic acid role is filled by S25. At S25 the chain carries Pyruvic acid (Ser). Residue T57 coordinates substrate. The Proton donor role is filled by Y58. Residue 73-75 (GAA) participates in substrate binding.

It belongs to the PanD family. Heterooctamer of four alpha and four beta subunits. Requires pyruvate as cofactor. Post-translationally, is synthesized initially as an inactive proenzyme, which is activated by self-cleavage at a specific serine bond to produce a beta-subunit with a hydroxyl group at its C-terminus and an alpha-subunit with a pyruvoyl group at its N-terminus.

It is found in the cytoplasm. It catalyses the reaction L-aspartate + H(+) = beta-alanine + CO2. The protein operates within cofactor biosynthesis; (R)-pantothenate biosynthesis; beta-alanine from L-aspartate: step 1/1. Its function is as follows. Catalyzes the pyruvoyl-dependent decarboxylation of aspartate to produce beta-alanine. This is Aspartate 1-decarboxylase from Mycolicibacterium gilvum (strain PYR-GCK) (Mycobacterium gilvum (strain PYR-GCK)).